The primary structure comprises 311 residues: Malate dehydrogenase (311 aa).

10–15 is a binding site for NAD(+); the sequence is GAGHTG. Arg85 and Arg91 together coordinate substrate. NAD(+) is bound by residues Asn98 and 121-123; that span reads LTN. Asn123 and Arg154 together coordinate substrate. His178 functions as the Proton acceptor in the catalytic mechanism.

The protein belongs to the LDH/MDH superfamily. MDH type 3 family.

It carries out the reaction (S)-malate + NAD(+) = oxaloacetate + NADH + H(+). Its function is as follows. Catalyzes the reversible oxidation of malate to oxaloacetate. This Staphylococcus carnosus (strain TM300) protein is Malate dehydrogenase.